Here is a 733-residue protein sequence, read N- to C-terminus: Catalase-peroxidase (733 aa).

The first 23 residues, 1 to 23 (MNNESKCPFAAAHGVRSPATARA), serve as a signal peptide directing secretion. The tryptophyl-tyrosyl-methioninium (Trp-Tyr) (with M-250) cross-link spans 96-224 (WHSAGTYRTA…LAAVQMGLIY (129 aa)). His97 functions as the Proton acceptor in the catalytic mechanism. Residues 224-250 (YVNPEGPDGNPDPVASGRDVRETFARM) constitute a cross-link (tryptophyl-tyrosyl-methioninium (Tyr-Met) (with W-96)). A heme b-binding site is contributed by His265.

Belongs to the peroxidase family. Peroxidase/catalase subfamily. Homodimer or homotetramer. Requires heme b as cofactor. Formation of the three residue Trp-Tyr-Met cross-link is important for the catalase, but not the peroxidase activity of the enzyme.

It catalyses the reaction H2O2 + AH2 = A + 2 H2O. The enzyme catalyses 2 H2O2 = O2 + 2 H2O. In terms of biological role, bifunctional enzyme with both catalase and broad-spectrum peroxidase activity. The chain is Catalase-peroxidase from Azoarcus sp. (strain BH72).